The chain runs to 873 residues: V-type proton ATPase 116 kDa subunit a 2 (873 aa).

Topologically, residues 1-407 are cytoplasmic; it reads MGSLSRSEEM…TIITFPFLFS (407 aa). A helical transmembrane segment spans residues 408–428; that stretch reads CMFGDLGHGCIMLMAGLWFVL. The Lumenal segment spans residues 429–445; it reads REKNLQARNIKDEIFNM. A helical transmembrane segment spans residues 446–466; the sequence is FFGGRYIILLMGLFSIHAGII. Topologically, residues 467-543 are cytoplasmic; that stretch reads YNDMFAKSFN…NKLNFLNSMK (77 aa). A helical transmembrane segment spans residues 544-564; it reads MKLSVILGISQMTFGVILSFF. Asn-565 and Asn-569 each carry an N-linked (GlcNAc...) asparagine glycan. Topologically, residues 565-574 are lumenal; sequence NHTYNKSKID. Residues 575 to 595 traverse the membrane as a helical segment; the sequence is IFTVFIPQMLFMGCIFMYLCL. The Cytoplasmic segment spans residues 596 to 614; it reads QIILKWLFFWTKEATVFGQ. The chain crosses the membrane as a helical span at residues 615-635; that stretch reads IYPGSHCAPSLLIGLINMFMM. Over 636 to 668 the chain is Lumenal; it reads KDRNAGFVVDGGKVNGEYREVETCYLSQWYPGQ. A helical transmembrane segment spans residues 669–689; it reads SVIEMILVVIAVICVPVMLFG. The Cytoplasmic portion of the chain corresponds to 690–785; it reads KPIHHVMQQK…LWALSLAHAQ (96 aa). The chain crosses the membrane as a helical span at residues 786–806; it reads LSEVLWHMVFVTGGLGISGTA. Gly-807 is a topological domain (lumenal). A helical transmembrane segment spans residues 808–828; that stretch reads FIAVYVVFFIFFVLTISILVL. At 829 to 873 the chain is on the cytoplasmic side; sequence MEGLSAFLHTLRLHWVEFQSKFYLGLGYPFVPYSFKTALQEAEAA.

It belongs to the V-ATPase 116 kDa subunit family. In terms of assembly, V-ATPase is a heteromultimeric enzyme made up of two complexes: the ATP-hydrolytic V1 complex and the proton translocation V0 complex. The V1 complex consists of three catalytic AB heterodimers that form a heterohexamer, three peripheral stalks each consisting of EG heterodimers, one central rotor including subunits D and F, and the regulatory subunits C and H. The proton translocation complex V0 consists of the proton transport subunit a, a ring of proteolipid subunits c9c'', rotary subunit d, subunits e and f, and the accessory subunits vah-19/Ac45 and vah-20/PRR. Interacts with V-type proton ATPase subunit C vha-11. As to expression, expressed in the H-shaped excretory cell (at protein level). Expressed in hypodermal cells around the vulva. Expressed in the main epidermal syncytium. Expressed in the sheath cells associated with head and tail sensory organs; specifically, expressed in the apical sheath cells of the amphids and CEP neuron and in the sheath cells of the OLQ sensory organ.

The protein resides in the apical cell membrane. It is found in the endosome. Its subcellular location is the multivesicular body membrane. Its function is as follows. Subunit of the V0 complex of vacuolar(H+)-ATPase (V-ATPase), a multisubunit enzyme composed of a peripheral complex (V1) that hydrolyzes ATP and a membrane integral complex (V0) that translocates protons. V-ATPase is responsible for acidifying and maintaining the pH of intracellular compartments and in some cell types, is targeted to the plasma membrane, where it is responsible for acidifying the extracellular environment. Involved in the assembly of the V-ATPase complex. The V-ATPase is required for the function of the excretory canal. Independently of the V1 complex, the V0 complex of the V-ATPase is required for multivesicular body membrane fusion with the apical membrane of the epidermal cells during exosome release and thus regulates the release of cuticle components such as Hedgehog-related peptide wrt-2 but not collagen. Also, in the epidermis, regulates the trafficking of che-14 and rdy-2. Regulates the secretion of granular material found in the amphid channel and in controlling osmoregulation in the amphid pocket. The chain is V-type proton ATPase 116 kDa subunit a 2 from Caenorhabditis elegans.